The chain runs to 544 residues: Chaperonin GroEL 4 (544 aa).

ATP-binding positions include 30-33, Lys51, 87-91, Gly415, and Asp496; these read TLGP and DGTTT.

The protein belongs to the chaperonin (HSP60) family. In terms of assembly, forms a cylinder of 14 subunits composed of two heptameric rings stacked back-to-back. Interacts with the co-chaperonin GroES.

It is found in the cytoplasm. It carries out the reaction ATP + H2O + a folded polypeptide = ADP + phosphate + an unfolded polypeptide.. Together with its co-chaperonin GroES, plays an essential role in assisting protein folding. The GroEL-GroES system forms a nano-cage that allows encapsulation of the non-native substrate proteins and provides a physical environment optimized to promote and accelerate protein folding. In Sinorhizobium medicae (strain WSM419) (Ensifer medicae), this protein is Chaperonin GroEL 4.